A 489-amino-acid chain; its full sequence is Hydantoin permease (489 aa).

The next 12 helical transmembrane spans lie at 30–50, 58–78, 104–124, 144–164, 167–187, 207–227, 258–278, 299–321, 339–359, 362–382, 405–424, and 428–445; these read FSLAAIWFAMAIQVAIFIAAG, VWQVIVAIAAGCTIAVILLFF, LIPITLKALLSLFWFGFQTWL, LWIVIFGAIQVVTTFYGITFI, MNVFASPVLLAMGVYMVYLML, MPFSTAIMIFVGGWIAVVVSI, LGMVPASIIFGFIGAASMVLV, AILFQVFVLLATWSTNPAANLLS, GVIVSAVVGLLMMPWQFAGVL, FLNLLASALGPLAGIMISDYF, RGVNWVALAVYAVALAVSFL, and LMFVTGLIAALLLHIPAM. Residues Ala-38 and Ile-41 each contribute to the Na(+) site. Gln-121 serves as a coordination point for substrate. Gly-219 is a binding site for substrate. The Na(+) site is built by Ala-309, Ser-312, and Thr-313. Asn-318 lines the substrate pocket. The interval 468 to 489 is disordered; it reads PIGPVAPADESATANTKEQNQR. Over residues 479–489 the composition is skewed to polar residues; that stretch reads ATANTKEQNQR.

The protein belongs to the purine-cytosine permease (2.A.39) family.

The protein resides in the membrane. With respect to regulation, inhibited by dinitrophenol, 5-(2-naphthylmethyl)-D-hydantoin (D-NMH), 5-(2-naphthylmethyl)-L-hydantoin (L-NMH), 5-bromovinylhydantoin (BVH) and 5-indolylmethyl-L-hydantoin (L-IMH). The affinity of benzyl-hydantoin is increased over 10-fold in the presence of 15 mM of sodium. Nucleobase-proton symporter that mediates the sodium-dependent binding and uptake of 5-aryl-substituted hydantoin compounds. 5-indolyl methyl hydantoin and 5-benzyl hydantoin are the preferred substrates, with selectivity for a hydrophobic substituent in position 5 of hydantoin and for the L isomer over the D isomer. This Microbacterium maritypicum (Microbacterium liquefaciens) protein is Hydantoin permease.